Here is a 93-residue protein sequence, read N- to C-terminus: Sec-independent protein translocase protein TatA (93 aa).

Residues 1 to 21 (MGSLSPWHWAILAVVVILLFG) traverse the membrane as a helical segment. The disordered stretch occupies residues 45–93 (EMQSENKTETSALGAQSESSAANPTPVQSQRVDPPAPSEQGHSEARPAS). Over residues 53–75 (ETSALGAQSESSAANPTPVQSQR) the composition is skewed to polar residues.

Belongs to the TatA/E family. The Tat system comprises two distinct complexes: a TatABC complex, containing multiple copies of TatA, TatB and TatC subunits, and a separate TatA complex, containing only TatA subunits. Substrates initially bind to the TatABC complex, which probably triggers association of the separate TatA complex to form the active translocon.

It localises to the cell membrane. Its function is as follows. Part of the twin-arginine translocation (Tat) system that transports large folded proteins containing a characteristic twin-arginine motif in their signal peptide across membranes. TatA could form the protein-conducting channel of the Tat system. This chain is Sec-independent protein translocase protein TatA, found in Mycolicibacterium paratuberculosis (strain ATCC BAA-968 / K-10) (Mycobacterium paratuberculosis).